The primary structure comprises 369 residues: Cyclic AMP receptor-like protein A (369 aa).

The Extracellular segment spans residues 1–4 (MIQI). Residues 5–22 (LLSTFISFIIIIVSSNDI) traverse the membrane as a helical segment. Residues 23 to 72 (RSGENDNFNNNKMINNFLTTITTNDTIIIKETESPNDYDFSKEQIESLDK) are Cytoplasmic-facing. Residues 73 to 93 (IVYFSSTMGIVGALFIIVSFF) traverse the membrane as a helical segment. Over 94 to 100 (LFKAART) the chain is Extracellular. The chain crosses the membrane as a helical span at residues 101-121 (FATKMIFFLSLSDLFAAIFYL). Residues 122–146 (PYYRDSDIMCNLQGMGLVFFLSSSY) are Cytoplasmic-facing. The helical transmembrane segment at 147-167 (LWTMCISISLFMVFFTTIFEL) threads the bilayer. Residues 168–173 (NHWFKY) are Extracellular-facing. A helical membrane pass occupies residues 174–194 (FHFICWGIPLFTAIISLIFHA). The Cytoplasmic portion of the chain corresponds to 195 to 212 (YGKTGSWCFISDPTSIFR). Residues 213–233 (LLYYLPLIVVFFINLVVFIAI) traverse the membrane as a helical segment. Topologically, residues 234 to 247 (RWKISQHSNSLVSR) are extracellular. A helical transmembrane segment spans residues 248 to 268 (VNIIVSFYLIAFSLSQLPTII). Residues 269–369 (NSIQNFSDPD…KLIIDDYNRV (101 aa)) lie on the Cytoplasmic side of the membrane.

It belongs to the G-protein coupled receptor 5 family.

Its subcellular location is the membrane. Functionally, receptor for cAMP which may play a role in prestalk cell differentiation. May act as a negative regulator of cell growth. The polypeptide is Cyclic AMP receptor-like protein A (crlA) (Dictyostelium discoideum (Social amoeba)).